A 356-amino-acid polypeptide reads, in one-letter code: MSNSNKDHFDMSDLGASLPAAAAALSAEDRAGLVNALKNKLQNLAGQHSDILETLTPQVRKRVDVLRELQSQHDELESHFFEERAALEAKYQKLYEPLYTKRYEIVNGVVEVEGVNEAPMNQEEDKEAGNEKGVPNFWLTAMKTNEILAEEISERDEEALKYLKDIKWCKIDDRKGFKLEFFFDTNPFFTNSVLTKTYHMIDDDDPILEKAIGTKIDWCPGKCLTQKILKKKPKKGSKNAKPIIKTETCESFFNFFKPPQVPEDDDDDDIDEDAAEELQNLMEQDYDIGSTIRDKIIPHAVSWFTGEAAEGDEFEDIEDDDDDDDDDDDEDDEDEEDEDDEEEEKSKKKSSALKVE.

Residues 34 to 88 (VNALKNKLQNLAGQHSDILETLTPQVRKRVDVLRELQSQHDELESHFFEERAALE) are a coiled coil. The Nuclear export signal signature appears at 55–70 (LTPQVRKRVDVLRELQ). The Nuclear localization signal motif lies at 230 to 235 (KKKPKK). The tract at residues 304 to 356 (FTGEAAEGDEFEDIEDDDDDDDDDDDEDDEDEEDEDDEEEEKSKKKSSALKVE) is disordered. The segment covering 309–343 (AEGDEFEDIEDDDDDDDDDDDEDDEDEEDEDDEEE) has biased composition (acidic residues). Basic residues predominate over residues 347–356 (KKKSSALKVE).

This sequence belongs to the nucleosome assembly protein (NAP) family. In terms of assembly, can form homomeric and heteromeric protein complexes with NAP1;3. Binds histones H2A and H2B in vivo. Also able to bind histones H1 and H4 in vitro. Interacts with CYCB1;1 and with alpha tubulin.

The protein localises to the nucleus. It is found in the cytoplasm. In terms of biological role, may modulate chromatin structure by regulation of nucleosome assembly/disassembly. Could function together with B-type cyclins in the regulation of microtubule dynamics. This chain is Nucleosome assembly protein 1;4 (NAP1;4), found in Nicotiana tabacum (Common tobacco).